Here is a 769-residue protein sequence, read N- to C-terminus: PDZ domain-containing protein 4 (769 aa).

Positions 130-214 (EVELYKSSHR…TNISLLVARP (85 aa)) constitute a PDZ domain. The segment at 221 to 315 (RWKDSDRDDF…TNTPGSLRKF (95 aa)) is disordered. Over residues 229-239 (DFLDDFGSENE) the composition is skewed to acidic residues. Position 236 is a phosphoserine (S236). Residues 282 to 298 (RTDESTRNEESSEHDLL) are compositionally biased toward basic and acidic residues. Residues 389 to 419 (VNRNESLGHEMAMLEEELRHLEFKCRNILRA) adopt a coiled-coil conformation. The interval 445–579 (ASEPKKHELS…RHRGQGQEGE (135 aa)) is disordered. Positions 447–467 (EPKKHELSDISELPEKSDKDS) are enriched in basic and acidic residues. The residue at position 454 (S454) is a Phosphoserine. Residues 468-479 (TSAYNTGESCRS) show a composition bias toward polar residues. The segment covering 530–547 (LSRDPEAGRRQHAEERGR) has biased composition (basic and acidic residues).

As to expression, brain-specific. Expressed in fetal and adult brain. Up-regulated in synovial carcinomas.

The protein localises to the cytoplasm. The protein resides in the cell cortex. The protein is PDZ domain-containing protein 4 (PDZD4) of Homo sapiens (Human).